The chain runs to 835 residues: Phenylalanine--tRNA ligase beta subunit (835 aa).

Residues 44 to 160 enclose the tRNA-binding domain; sequence PETTGPLVFG…SYGEPGEDAR (117 aa). The region spanning 419 to 494 is the B5 domain; the sequence is PAMQPITMKV…RLEGLEAIPT (76 aa). The Mg(2+) site is built by aspartate 472, aspartate 478, glutamate 481, and glutamate 482. The region spanning 741–834 is the FDX-ACB domain; sequence SSFPALHQDI…AKEKFNAEMR (94 aa).

This sequence belongs to the phenylalanyl-tRNA synthetase beta subunit family. Type 1 subfamily. Tetramer of two alpha and two beta subunits. The cofactor is Mg(2+).

The protein localises to the cytoplasm. It carries out the reaction tRNA(Phe) + L-phenylalanine + ATP = L-phenylalanyl-tRNA(Phe) + AMP + diphosphate + H(+). This chain is Phenylalanine--tRNA ligase beta subunit, found in Corynebacterium glutamicum (strain ATCC 13032 / DSM 20300 / JCM 1318 / BCRC 11384 / CCUG 27702 / LMG 3730 / NBRC 12168 / NCIMB 10025 / NRRL B-2784 / 534).